The sequence spans 248 residues: Ras-like protein family member 11B (248 aa).

Residues 29-246 are small GTPase-like; that stretch reads AGRRLVKIAV…ALSAKVRTVT (218 aa). Residues 40–47, 87–94, and 152–155 contribute to the GTP site; these read GASGVGKT, DTPGIQVH, and NKAD. A disordered region spans residues 205–226; the sequence is QQPSSTPEKRRTSLIPRPKSPN.

Belongs to the small GTPase superfamily. Ras family. Widely expressed with highest levels in placenta and primary macrophages.

The catalysed reaction is GTP + H2O = GDP + phosphate + H(+). This is Ras-like protein family member 11B from Homo sapiens (Human).